Reading from the N-terminus, the 103-residue chain is Large ribosomal subunit protein uL24 (103 aa).

The protein belongs to the universal ribosomal protein uL24 family. As to quaternary structure, part of the 50S ribosomal subunit.

In terms of biological role, one of two assembly initiator proteins, it binds directly to the 5'-end of the 23S rRNA, where it nucleates assembly of the 50S subunit. Its function is as follows. One of the proteins that surrounds the polypeptide exit tunnel on the outside of the subunit. The polypeptide is Large ribosomal subunit protein uL24 (Exiguobacterium sibiricum (strain DSM 17290 / CCUG 55495 / CIP 109462 / JCM 13490 / 255-15)).